The following is a 216-amino-acid chain: Fibroblast growth factor 19 (216 aa).

Residues 1 to 24 form the signal peptide; the sequence is MRSGCVVVHVWILAGLWLAVAGRP. 2 disulfides stabilise this stretch: Cys-58-Cys-70 and Cys-102-Cys-120.

This sequence belongs to the heparin-binding growth factors family. Interacts with FGFR1, FGFR2, FGFR3 and FGFR4. Affinity between fibroblast growth factors (FGFs) and their receptors is increased by KL, KLB and heparan sulfate glycosaminoglycans that function as coreceptors. Interacts with KL; this interaction is direct. Interacts with KLB; this interaction is direct. Interacts with FGFR4 in the presence of heparin, KL or KLB. Interacts with MALRD1. As to expression, expressed in fetal brain, cartilage, retina, and adult gall bladder.

The protein resides in the secreted. Functionally, involved in the suppression of bile acid biosynthesis through down-regulation of CYP7A1 expression, following positive regulation of the JNK and ERK1/2 cascades. Stimulates glucose uptake in adipocytes. Activity requires the presence of KLB and FGFR4. The chain is Fibroblast growth factor 19 (FGF19) from Homo sapiens (Human).